Here is a 475-residue protein sequence, read N- to C-terminus: Ribulose bisphosphate carboxylase large chain (475 aa).

Residues 1–2 (MS) constitute a propeptide that is removed on maturation. The residue at position 3 (Pro-3) is an N-acetylproline. Lys-14 is modified (N6,N6,N6-trimethyllysine). Residues Asn-123 and Thr-173 each contribute to the substrate site. The Proton acceptor role is filled by Lys-175. Substrate is bound at residue Lys-177. The Mg(2+) site is built by Lys-201, Asp-203, and Glu-204. The residue at position 201 (Lys-201) is an N6-carboxylysine. His-294 (proton acceptor) is an active-site residue. 3 residues coordinate substrate: Arg-295, His-327, and Ser-379.

This sequence belongs to the RuBisCO large chain family. Type I subfamily. As to quaternary structure, heterohexadecamer of 8 large chains and 8 small chains; disulfide-linked. The disulfide link is formed within the large subunit homodimers. It depends on Mg(2+) as a cofactor. The disulfide bond which can form in the large chain dimeric partners within the hexadecamer appears to be associated with oxidative stress and protein turnover.

Its subcellular location is the plastid. The protein resides in the chloroplast. The catalysed reaction is 2 (2R)-3-phosphoglycerate + 2 H(+) = D-ribulose 1,5-bisphosphate + CO2 + H2O. It catalyses the reaction D-ribulose 1,5-bisphosphate + O2 = 2-phosphoglycolate + (2R)-3-phosphoglycerate + 2 H(+). Functionally, ruBisCO catalyzes two reactions: the carboxylation of D-ribulose 1,5-bisphosphate, the primary event in carbon dioxide fixation, as well as the oxidative fragmentation of the pentose substrate in the photorespiration process. Both reactions occur simultaneously and in competition at the same active site. The sequence is that of Ribulose bisphosphate carboxylase large chain from Picea abies (Norway spruce).